Consider the following 444-residue polypeptide: Chromosomal replication initiator protein DnaA (444 aa).

Positions 1–66 (MKSEIIESLK…SKTLRELFGK (66 aa)) are domain I, interacts with DnaA modulators. The interval 66–100 (KPMDFRIEHASAKTEEKLDSNEDEPLVKKRPLILT) is domain II. Residues 101 to 317 (PLNPILTFEN…GALVKLIMYQ (217 aa)) are domain III, AAA+ region. Residues G144, G146, K147, and T148 each coordinate ATP. Residues 318–444 (QISGEKVDLQ…VTGQILDQSV (127 aa)) are domain IV, binds dsDNA.

Belongs to the DnaA family. Oligomerizes as a right-handed, spiral filament on DNA at oriC.

The protein localises to the cytoplasm. Plays an essential role in the initiation and regulation of chromosomal replication. ATP-DnaA binds to the origin of replication (oriC) to initiate formation of the DNA replication initiation complex once per cell cycle. Binds the DnaA box (a 9 base pair repeat at the origin) and separates the double-stranded (ds)DNA. Forms a right-handed helical filament on oriC DNA; dsDNA binds to the exterior of the filament while single-stranded (ss)DNA is stabiized in the filament's interior. The ATP-DnaA-oriC complex binds and stabilizes one strand of the AT-rich DNA unwinding element (DUE), permitting loading of DNA polymerase. After initiation quickly degrades to an ADP-DnaA complex that is not apt for DNA replication. Binds acidic phospholipids. This is Chromosomal replication initiator protein DnaA from Pseudothermotoga lettingae (strain ATCC BAA-301 / DSM 14385 / NBRC 107922 / TMO) (Thermotoga lettingae).